The chain runs to 162 residues: NADH-quinone oxidoreductase subunit I (162 aa).

4Fe-4S ferredoxin-type domains lie at 53–83 and 93–122; these read LRRY…IEAE and TRYD…EGPN. Cys-63, Cys-66, Cys-69, Cys-73, Cys-102, Cys-105, Cys-108, and Cys-112 together coordinate [4Fe-4S] cluster.

This sequence belongs to the complex I 23 kDa subunit family. In terms of assembly, NDH-1 is composed of 14 different subunits. Subunits NuoA, H, J, K, L, M, N constitute the membrane sector of the complex. [4Fe-4S] cluster serves as cofactor.

It is found in the cell inner membrane. The enzyme catalyses a quinone + NADH + 5 H(+)(in) = a quinol + NAD(+) + 4 H(+)(out). Functionally, NDH-1 shuttles electrons from NADH, via FMN and iron-sulfur (Fe-S) centers, to quinones in the respiratory chain. The immediate electron acceptor for the enzyme in this species is believed to be ubiquinone. Couples the redox reaction to proton translocation (for every two electrons transferred, four hydrogen ions are translocated across the cytoplasmic membrane), and thus conserves the redox energy in a proton gradient. The protein is NADH-quinone oxidoreductase subunit I of Sphingopyxis alaskensis (strain DSM 13593 / LMG 18877 / RB2256) (Sphingomonas alaskensis).